The sequence spans 643 residues: Phosphomethylpyrimidine synthase (643 aa).

Residues N221, M250, Y279, H315, 335–337 (SRG), 376–379 (DGLR), and E415 contribute to the substrate site. H419 provides a ligand contact to Zn(2+). Y442 contacts substrate. Zn(2+) is bound at residue H483. Residues C563, C566, and C571 each coordinate [4Fe-4S] cluster.

Belongs to the ThiC family. Homodimer. It depends on [4Fe-4S] cluster as a cofactor.

The catalysed reaction is 5-amino-1-(5-phospho-beta-D-ribosyl)imidazole + S-adenosyl-L-methionine = 4-amino-2-methyl-5-(phosphooxymethyl)pyrimidine + CO + 5'-deoxyadenosine + formate + L-methionine + 3 H(+). It functions in the pathway cofactor biosynthesis; thiamine diphosphate biosynthesis. Catalyzes the synthesis of the hydroxymethylpyrimidine phosphate (HMP-P) moiety of thiamine from aminoimidazole ribotide (AIR) in a radical S-adenosyl-L-methionine (SAM)-dependent reaction. This chain is Phosphomethylpyrimidine synthase, found in Nitrobacter hamburgensis (strain DSM 10229 / NCIMB 13809 / X14).